The chain runs to 313 residues: Protoheme IX farnesyltransferase (313 aa).

9 helical membrane passes run 35–55 (LVIFTALVGLLLAPGYIHPVL), 56–76 (AFTSILCIAVGAGASGALNMW), 98–118 (VSKPEALTFGLVLSFFSVVTL), 120–140 (ILVNWFAAALLAFTIFFYVVI), 153–173 (IVIGGAAGALPPVVAWAAAAG), 180–200 (MLLFAIIFFWTPPHFWALALF), 226–246 (ILLYTIVLVAVAFAPWPLGYF), 248–268 (AIYGITSLALGGWMLLLTLRV), and 285–305 (FKFSILYLFALFAVLLLEVIV).

The protein belongs to the UbiA prenyltransferase family. Protoheme IX farnesyltransferase subfamily.

Its subcellular location is the cell inner membrane. It carries out the reaction heme b + (2E,6E)-farnesyl diphosphate + H2O = Fe(II)-heme o + diphosphate. It functions in the pathway porphyrin-containing compound metabolism; heme O biosynthesis; heme O from protoheme: step 1/1. Converts heme B (protoheme IX) to heme O by substitution of the vinyl group on carbon 2 of heme B porphyrin ring with a hydroxyethyl farnesyl side group. This is Protoheme IX farnesyltransferase from Rhodopseudomonas palustris (strain BisB18).